The primary structure comprises 501 residues: GMP synthase [glutamine-hydrolyzing] (501 aa).

Residues 1–185 (MVLVVDYGSQ…LFNVCKLEKN (185 aa)) enclose the Glutamine amidotransferase type-1 domain. Cys75 serves as the catalytic Nucleophile. Catalysis depends on residues His159 and Glu161. A GMPS ATP-PPase domain is found at 186 to 376 (WKIGDLVEEK…LGIPDRIINR (191 aa)). 213–219 (SGGVDSS) is an ATP binding site.

As to quaternary structure, homodimer.

The catalysed reaction is XMP + L-glutamine + ATP + H2O = GMP + L-glutamate + AMP + diphosphate + 2 H(+). It participates in purine metabolism; GMP biosynthesis; GMP from XMP (L-Gln route): step 1/1. In terms of biological role, catalyzes the synthesis of GMP from XMP. This Thermotoga petrophila (strain ATCC BAA-488 / DSM 13995 / JCM 10881 / RKU-1) protein is GMP synthase [glutamine-hydrolyzing].